A 477-amino-acid chain; its full sequence is Proline--tRNA ligase (477 aa).

The protein belongs to the class-II aminoacyl-tRNA synthetase family. ProS type 3 subfamily. In terms of assembly, homodimer.

The protein localises to the cytoplasm. The enzyme catalyses tRNA(Pro) + L-proline + ATP = L-prolyl-tRNA(Pro) + AMP + diphosphate. In terms of biological role, catalyzes the attachment of proline to tRNA(Pro) in a two-step reaction: proline is first activated by ATP to form Pro-AMP and then transferred to the acceptor end of tRNA(Pro). In Lachnoclostridium phytofermentans (strain ATCC 700394 / DSM 18823 / ISDg) (Clostridium phytofermentans), this protein is Proline--tRNA ligase.